Consider the following 228-residue polypeptide: Sodium channel regulatory subunit beta-4 (228 aa).

The first 30 residues, 1-30 (MPGARDQGAARARWLGIGLLGLFLLPVSLS), serve as a signal peptide directing secretion. The region spanning 31–148 (LEVSVGKATT…NDFQHQATIF (118 aa)) is the Ig-like C2-type domain. At 31-162 (LEVSVGKATT…DKLEEVDNTV (132 aa)) the chain is on the extracellular side. N-linked (GlcNAc...) asparagine glycans are attached at residues asparagine 45, asparagine 71, and asparagine 113. Cysteine 53 and cysteine 131 form a disulfide bridge. The helical transmembrane segment at 163–183 (TLIILGVVGGVIGLLIFILLV) threads the bilayer. Residues 184–228 (KKFIAFIIKKTQEKKKECLVSSSGNDNTENGLPGSKAEEKAPTKV) lie on the Cytoplasmic side of the membrane. The disordered stretch occupies residues 198 to 228 (KKECLVSSSGNDNTENGLPGSKAEEKAPTKV). The span at 203–213 (VSSSGNDNTEN) shows a compositional bias: polar residues. A compositionally biased stretch (basic and acidic residues) spans 219 to 228 (KAEEKAPTKV).

This sequence belongs to the sodium channel auxiliary subunit SCN4B (TC 8.A.17) family. As to quaternary structure, a voltage-gated sodium (Nav) channel consists of an ion-conducting pore-forming alpha subunit functional on its own that is regulated by one or more beta subunits. The beta subunit SCN4B is disulfide-linked to the pore-forming alpha subunit. Interacts with SCN1A; regulatory subunit of SCN1A/Nav1.1. Interacts with SCN2A; regulatory subunit of SCN2A/Nav1.2. In terms of processing, contains an interchain disulfide bond with SCN2A.

It localises to the cell membrane. In terms of biological role, regulatory subunit of multiple voltage-gated sodium (Nav) channels directly mediating the depolarization of excitable membranes. Navs, also called VGSCs (voltage-gated sodium channels) or VDSCs (voltage-dependent sodium channels), operate by switching between closed and open conformations depending on the voltage difference across the membrane. In the open conformation they allow Na(+) ions to selectively pass through the pore, along their electrochemical gradient. The influx of Na+ ions provokes membrane depolarization, initiating the propagation of electrical signals throughout cells and tissues. The accessory beta subunits participate in localization and functional modulation of the Nav channels. Modulates the activity of SCN1A/Nav1.1. Modulates the activity of SCN2A/Nav1.2. The polypeptide is Sodium channel regulatory subunit beta-4 (Bos taurus (Bovine)).